Here is a 367-residue protein sequence, read N- to C-terminus: Probable dual-specificity RNA methyltransferase RlmN (367 aa).

Glu-92 acts as the Proton acceptor in catalysis. The region spanning 98–326 (QEYGLSVCVT…YDTLKKNGIN (229 aa)) is the Radical SAM core domain. Cys-105 and Cys-341 form a disulfide bridge. 3 residues coordinate [4Fe-4S] cluster: Cys-112, Cys-116, and Cys-119. Residues 164–165 (GE), Ser-196, 219–221 (SLH), and Asn-297 contribute to the S-adenosyl-L-methionine site. Cys-341 acts as the S-methylcysteine intermediate in catalysis.

The protein belongs to the radical SAM superfamily. RlmN family. Requires [4Fe-4S] cluster as cofactor.

The protein resides in the cytoplasm. The enzyme catalyses adenosine(2503) in 23S rRNA + 2 reduced [2Fe-2S]-[ferredoxin] + 2 S-adenosyl-L-methionine = 2-methyladenosine(2503) in 23S rRNA + 5'-deoxyadenosine + L-methionine + 2 oxidized [2Fe-2S]-[ferredoxin] + S-adenosyl-L-homocysteine. It carries out the reaction adenosine(37) in tRNA + 2 reduced [2Fe-2S]-[ferredoxin] + 2 S-adenosyl-L-methionine = 2-methyladenosine(37) in tRNA + 5'-deoxyadenosine + L-methionine + 2 oxidized [2Fe-2S]-[ferredoxin] + S-adenosyl-L-homocysteine. Its function is as follows. Specifically methylates position 2 of adenine 2503 in 23S rRNA and position 2 of adenine 37 in tRNAs. In Listeria monocytogenes serovar 1/2a (strain ATCC BAA-679 / EGD-e), this protein is Probable dual-specificity RNA methyltransferase RlmN.